A 663-amino-acid chain; its full sequence is Tripartite terminase subunit 3 (663 aa).

The Walker A motif signature appears at 205 to 212; that stretch reads VPRRHGKT. The short motif at 297–302 is the Walker B motif element; that stretch reads LLIVDE. Glu302 (for ATPase activity) is an active-site residue. Active-site for nuclease activity residues include Asp455, Glu526, and Asp640.

The protein belongs to the herpesviridae TRM3 protein family. In terms of assembly, interacts with the terminase subunits TRM1 and TRM2. Interacts with portal protein.

The protein localises to the host nucleus. Its function is as follows. Component of the molecular motor that translocates viral genomic DNA in empty capsid during DNA packaging. Forms a tripartite terminase complex together with TRM1 and TRM2 in the host cytoplasm. Once the complex reaches the host nucleus, it interacts with the capsid portal vertex. This portal forms a ring in which genomic DNA is translocated into the capsid. TRM3 carries an RNase H-like nuclease activity that plays an important role for the cleavage of concatemeric viral DNA into unit length genomes. In Human herpesvirus 7 (strain JI) (HHV-7), this protein is Tripartite terminase subunit 3.